A 234-amino-acid polypeptide reads, in one-letter code: Large ribosomal subunit protein uL1 (234 aa).

The protein belongs to the universal ribosomal protein uL1 family. Part of the 50S ribosomal subunit.

Binds directly to 23S rRNA. The L1 stalk is quite mobile in the ribosome, and is involved in E site tRNA release. Its function is as follows. Protein L1 is also a translational repressor protein, it controls the translation of the L11 operon by binding to its mRNA. This chain is Large ribosomal subunit protein uL1, found in Sulfurovum sp. (strain NBC37-1).